A 454-amino-acid polypeptide reads, in one-letter code: 3-phosphoshikimate 1-carboxyvinyltransferase (454 aa).

Residues 1-31 form a disordered region; it reads MSENHSEGASRPVISRRPAAGLRADHPVHVP. Residues lysine 34, serine 35, and arginine 39 each coordinate 3-phosphoshikimate. Residue lysine 34 participates in phosphoenolpyruvate binding. Positions 107 and 135 each coordinate phosphoenolpyruvate. Serine 180, glutamine 182, aspartate 334, and lysine 361 together coordinate 3-phosphoshikimate. Phosphoenolpyruvate is bound at residue glutamine 182. Aspartate 334 (proton acceptor) is an active-site residue. Residues arginine 365 and arginine 409 each contribute to the phosphoenolpyruvate site.

The protein belongs to the EPSP synthase family. In terms of assembly, monomer.

The protein resides in the cytoplasm. The enzyme catalyses 3-phosphoshikimate + phosphoenolpyruvate = 5-O-(1-carboxyvinyl)-3-phosphoshikimate + phosphate. It functions in the pathway metabolic intermediate biosynthesis; chorismate biosynthesis; chorismate from D-erythrose 4-phosphate and phosphoenolpyruvate: step 6/7. In terms of biological role, catalyzes the transfer of the enolpyruvyl moiety of phosphoenolpyruvate (PEP) to the 5-hydroxyl of shikimate-3-phosphate (S3P) to produce enolpyruvyl shikimate-3-phosphate and inorganic phosphate. The protein is 3-phosphoshikimate 1-carboxyvinyltransferase of Granulibacter bethesdensis (strain ATCC BAA-1260 / CGDNIH1).